We begin with the raw amino-acid sequence, 150 residues long: uncharacterized protein (150 aa).

This is an uncharacterized protein from Methanocaldococcus jannaschii (strain ATCC 43067 / DSM 2661 / JAL-1 / JCM 10045 / NBRC 100440) (Methanococcus jannaschii).